Reading from the N-terminus, the 192-residue chain is Probable nicotinate-nucleotide adenylyltransferase (192 aa).

Belongs to the NadD family.

The catalysed reaction is nicotinate beta-D-ribonucleotide + ATP + H(+) = deamido-NAD(+) + diphosphate. It functions in the pathway cofactor biosynthesis; NAD(+) biosynthesis; deamido-NAD(+) from nicotinate D-ribonucleotide: step 1/1. Functionally, catalyzes the reversible adenylation of nicotinate mononucleotide (NaMN) to nicotinic acid adenine dinucleotide (NaAD). In Cereibacter sphaeroides (strain ATCC 17029 / ATH 2.4.9) (Rhodobacter sphaeroides), this protein is Probable nicotinate-nucleotide adenylyltransferase.